We begin with the raw amino-acid sequence, 309 residues long: Elongation factor Ts (309 aa).

Residues 82–85 (TDFV) are involved in Mg(2+) ion dislocation from EF-Tu.

Belongs to the EF-Ts family.

The protein resides in the cytoplasm. Associates with the EF-Tu.GDP complex and induces the exchange of GDP to GTP. It remains bound to the aminoacyl-tRNA.EF-Tu.GTP complex up to the GTP hydrolysis stage on the ribosome. The protein is Elongation factor Ts of Rickettsia akari (strain Hartford).